The chain runs to 385 residues: Elsinochromes biosynthesis cluster protein HP2 (385 aa).

An N-terminal signal peptide occupies residues 1 to 22 (MVLLYILIMVALIPMYMTVVQD). 2 helical membrane-spanning segments follow: residues 94-114 (TVLS…SMFD) and 148-168 (FYGQ…IVLW). A glycan (N-linked (GlcNAc...) asparagine) is linked at Asn187. Residues 209–229 (SWTFGQIVPIVLLVSPLVAAF) form a helical membrane-spanning segment. Residue Asn248 is glycosylated (N-linked (GlcNAc...) asparagine). 2 helical membrane passes run 309-329 (AILF…LPLA) and 344-364 (YYAF…AVPF).

The protein localises to the membrane. In terms of biological role, part of the gene cluster that mediates the biosynthesis of elsinochromes, pigments consisting of at least four interconvertible tautomers (A, B, C and D) that have a core phenolic quinone to which various side chains are attached and which play an important role in fungal pathogenesis. The non-reducing polyketide synthase PKS1 was proposed to iteratively catalyze decarboxylation between acetyl-CoA and malonyl-CoA subunits for polyketide chain elongation. The released polyketide undergoes cyclization to form an aromatic ring, and proceeds via serial modification steps to produce the heptaketide back- bone of elsinochrome. As elsinochrome has a symmetrical structure, two identical heptaketides are fused to form a core 1,2-dihydrobenzo-perylene ring structure, which can then be successively modified to produce the various derivatives of elsinochrome. Some of these reactions may be cooperatively carried out, at least in part, by the products of RDT1, OXR1 and PKS1. PRF1, embedded within the elsinochrome cluster possibly functions to stabilize some of the biosynthetic enzymes required for elsinochrome production. As prefoldin is a hexamer containing 2 a and 4 b subunits, additional prefoldin subunits, whose coding genes may not immediately link to the elsinochrome biosynthetic gene cluster, are required to fulfill the chaperone function. In addition, no methyltransferase-coding gene exists within the biosynthetic gene cluster, even though elsinochrome has four methyl groups at positions C3, C7, C8 and C12. Apparently, the identified gene cluster does not contain the entire entourage of genes responsible for elsinochrome biosynthesis. Once elsinochrome is synthesized, it must be exported outside the fungal cells, which is probably accomplished by the ECT1 transporter, to avoid toxicity. This Elsinoe fawcettii (Citrus scab fungus) protein is Elsinochromes biosynthesis cluster protein HP2.